Consider the following 905-residue polypeptide: Probable cation-transporting ATPase F (905 aa).

3 helical membrane passes run E84 to I104, F248 to L268, and A283 to I303. The active-site 4-aspartylphosphate intermediate is the D333. 2 residues coordinate Mg(2+): D643 and D647. 6 consecutive transmembrane segments (helical) span residues I716–I736, M738–M758, T778–D798, T808–L828, W842–A862, and I872–A892.

This sequence belongs to the cation transport ATPase (P-type) (TC 3.A.3) family. Type IIA subfamily.

It is found in the cell membrane. The enzyme catalyses ATP + H2O = ADP + phosphate + H(+). This chain is Probable cation-transporting ATPase F (ctpF), found in Mycobacterium bovis (strain ATCC BAA-935 / AF2122/97).